The chain runs to 349 residues: Signal peptidase I (349 aa).

The next 2 helical transmembrane spans lie at Asn3 to Phe23 and Leu25 to Cys45. Residues Tyr46 to Pro80 lie on the Cytoplasmic side of the membrane. Residues Ile81–Val101 form a helical membrane-spanning segment. Residues Arg102–Lys349 lie on the Periplasmic side of the membrane. Active-site residues include Ser115 and Lys196.

It belongs to the peptidase S26 family.

The protein localises to the cell inner membrane. It carries out the reaction Cleavage of hydrophobic, N-terminal signal or leader sequences from secreted and periplasmic proteins.. This Haemophilus influenzae (strain ATCC 51907 / DSM 11121 / KW20 / Rd) protein is Signal peptidase I (lepB).